We begin with the raw amino-acid sequence, 354 residues long: Probable protein phosphatase 2C 69 (354 aa).

The region spanning 33–279 (SYGYASSAGK…DNITCVVVRF (247 aa)) is the PPM-type phosphatase domain. Residues D69, G70, D231, and D270 each contribute to the Mn(2+) site. The tract at residues 289 to 354 (HISSSSSKEA…LERNSVTDKV (66 aa)) is disordered. Composition is skewed to polar residues over residues 309–328 (ISSN…PENV) and 336–348 (ASRS…LERN).

This sequence belongs to the PP2C family. It depends on Mg(2+) as a cofactor. Mn(2+) is required as a cofactor.

It catalyses the reaction O-phospho-L-seryl-[protein] + H2O = L-seryl-[protein] + phosphate. The catalysed reaction is O-phospho-L-threonyl-[protein] + H2O = L-threonyl-[protein] + phosphate. The sequence is that of Probable protein phosphatase 2C 69 from Arabidopsis thaliana (Mouse-ear cress).